We begin with the raw amino-acid sequence, 146 residues long: 3-dehydroquinate dehydratase (146 aa).

The Proton acceptor role is filled by Tyr23. Residues Asn74, His80, and Asp87 each coordinate substrate. The active-site Proton donor is His100. Substrate contacts are provided by residues 101-102 (IS) and Arg111.

The protein belongs to the type-II 3-dehydroquinase family. In terms of assembly, homododecamer.

It catalyses the reaction 3-dehydroquinate = 3-dehydroshikimate + H2O. The protein operates within metabolic intermediate biosynthesis; chorismate biosynthesis; chorismate from D-erythrose 4-phosphate and phosphoenolpyruvate: step 3/7. In terms of biological role, catalyzes a trans-dehydration via an enolate intermediate. The protein is 3-dehydroquinate dehydratase of Bacillus cereus (strain ATCC 10987 / NRS 248).